The primary structure comprises 281 residues: Type VI secretion system accessory component TagJ (281 aa).

As to quaternary structure, interacts with TssB1 (via N-terminus). Interacts with ClpV1.

Component of the H1 type VI (H1-T6SS) secretion system that plays a role in the release of toxins targeting both eukaryotic and prokaryotic species. Forms a stable complex with TssB1. This complex, although not crucial for the H1-T6SS function, may fine-tune the assembly of the system. Plays a role in the interaction between ClpV1 and the TssC1/TssB1 sheath. The chain is Type VI secretion system accessory component TagJ from Pseudomonas aeruginosa (strain ATCC 15692 / DSM 22644 / CIP 104116 / JCM 14847 / LMG 12228 / 1C / PRS 101 / PAO1).